Consider the following 542-residue polypeptide: CTP synthase (542 aa).

Positions 1 to 265 (MTRYVFITGG…DREILAHFQM (265 aa)) are amidoligase domain. Residue S13 coordinates CTP. Residue S13 coordinates UTP. ATP contacts are provided by residues 14–19 (SLGKGL) and D71. 2 residues coordinate Mg(2+): D71 and E139. CTP-binding positions include 146 to 148 (DIE), 186 to 191 (KTKPTQ), and K222. Residues 186–191 (KTKPTQ) and K222 contribute to the UTP site. 238-240 (RDV) contacts ATP. A Glutamine amidotransferase type-1 domain is found at 291–541 (TIAIVGKYTG…IAAAIEQSRL (251 aa)). An L-glutamine-binding site is contributed by G353. The active-site Nucleophile; for glutamine hydrolysis is C380. L-glutamine-binding positions include 381–384 (FGMQ), E404, and R469. Catalysis depends on residues H514 and E516.

Belongs to the CTP synthase family. Homotetramer.

It carries out the reaction UTP + L-glutamine + ATP + H2O = CTP + L-glutamate + ADP + phosphate + 2 H(+). The enzyme catalyses L-glutamine + H2O = L-glutamate + NH4(+). It catalyses the reaction UTP + NH4(+) + ATP = CTP + ADP + phosphate + 2 H(+). The protein operates within pyrimidine metabolism; CTP biosynthesis via de novo pathway; CTP from UDP: step 2/2. With respect to regulation, allosterically activated by GTP, when glutamine is the substrate; GTP has no effect on the reaction when ammonia is the substrate. The allosteric effector GTP functions by stabilizing the protein conformation that binds the tetrahedral intermediate(s) formed during glutamine hydrolysis. Inhibited by the product CTP, via allosteric rather than competitive inhibition. Functionally, catalyzes the ATP-dependent amination of UTP to CTP with either L-glutamine or ammonia as the source of nitrogen. Regulates intracellular CTP levels through interactions with the four ribonucleotide triphosphates. In Methylorubrum populi (strain ATCC BAA-705 / NCIMB 13946 / BJ001) (Methylobacterium populi), this protein is CTP synthase.